We begin with the raw amino-acid sequence, 251 residues long: Putative ATP-binding protein Rv3427c in insertion sequence (251 aa).

108–115 (GPVGVGKT) is an ATP binding site.

Belongs to the IS21/IS1162 putative ATP-binding protein family.

The protein is Putative ATP-binding protein Rv3427c in insertion sequence of Mycobacterium tuberculosis (strain ATCC 25618 / H37Rv).